Consider the following 168-residue polypeptide: Gremlin-2 (168 aa).

The N-terminal stretch at 1–21 (MFWKLSLSLFLVAVLVKVAEA) is a signal peptide. A glycan (N-linked (GlcNAc...) asparagine) is linked at Asn-40. 4 cysteine pairs are disulfide-bonded: Cys-73–Cys-123, Cys-87–Cys-137, Cys-97–Cys-155, and Cys-101–Cys-157. Residues 73–163 (CKTQPLRQTV…QCRCMSVNLS (91 aa)) enclose the CTCK domain. N-linked (GlcNAc...) asparagine glycosylation is present at Asn-161.

The protein belongs to the DAN family. As to quaternary structure, homodimer. Interacts with BMP2, BMP4 and BMP7, but has lower affinity for BMP7 than for BMP2 and BMP4. Binds heparin; this impairs the interaction with BMP2. In terms of processing, N-glycosylated.

The protein resides in the secreted. Cytokine that inhibits the activity of BMP2 and BMP4 in a dose-dependent manner, and thereby modulates signaling by BMP family members. Contributes to the regulation of embryonic morphogenesis via BMP family members. Antagonizes BMP4-induced suppression of progesterone production in granulosa cells. This chain is Gremlin-2 (GREM2), found in Homo sapiens (Human).